An 88-amino-acid chain; its full sequence is Small ribosomal subunit protein bS16 (88 aa).

Belongs to the bacterial ribosomal protein bS16 family.

The polypeptide is Small ribosomal subunit protein bS16 (Symbiobacterium thermophilum (strain DSM 24528 / JCM 14929 / IAM 14863 / T)).